The chain runs to 158 residues: Crossover junction endodeoxyribonuclease RuvC (158 aa).

Active-site residues include D7, E67, and D139. Positions 7, 67, and 139 each coordinate Mg(2+).

Belongs to the RuvC family. Homodimer which binds Holliday junction (HJ) DNA. The HJ becomes 2-fold symmetrical on binding to RuvC with unstacked arms; it has a different conformation from HJ DNA in complex with RuvA. In the full resolvosome a probable DNA-RuvA(4)-RuvB(12)-RuvC(2) complex forms which resolves the HJ. Requires Mg(2+) as cofactor.

The protein resides in the cytoplasm. The enzyme catalyses Endonucleolytic cleavage at a junction such as a reciprocal single-stranded crossover between two homologous DNA duplexes (Holliday junction).. Functionally, the RuvA-RuvB-RuvC complex processes Holliday junction (HJ) DNA during genetic recombination and DNA repair. Endonuclease that resolves HJ intermediates. Cleaves cruciform DNA by making single-stranded nicks across the HJ at symmetrical positions within the homologous arms, yielding a 5'-phosphate and a 3'-hydroxyl group; requires a central core of homology in the junction. The consensus cleavage sequence is 5'-(A/T)TT(C/G)-3'. Cleavage occurs on the 3'-side of the TT dinucleotide at the point of strand exchange. HJ branch migration catalyzed by RuvA-RuvB allows RuvC to scan DNA until it finds its consensus sequence, where it cleaves and resolves the cruciform DNA. The polypeptide is Crossover junction endodeoxyribonuclease RuvC (Prochlorococcus marinus (strain MIT 9211)).